Here is a 255-residue protein sequence, read N- to C-terminus: Proteasome subunit alpha (255 aa).

This sequence belongs to the peptidase T1A family. The 20S proteasome core is composed of 14 alpha and 14 beta subunits that assemble into four stacked heptameric rings, resulting in a barrel-shaped structure. The two inner rings, each composed of seven catalytic beta subunits, are sandwiched by two outer rings, each composed of seven alpha subunits. The catalytic chamber with the active sites is on the inside of the barrel. Has a gated structure, the ends of the cylinder being occluded by the N-termini of the alpha-subunits. Is capped at one or both ends by the proteasome regulatory ATPase, PAN.

It localises to the cytoplasm. Its activity is regulated as follows. The formation of the proteasomal ATPase PAN-20S proteasome complex, via the docking of the C-termini of PAN into the intersubunit pockets in the alpha-rings, triggers opening of the gate for substrate entry. Interconversion between the open-gate and close-gate conformations leads to a dynamic regulation of the 20S proteasome proteolysis activity. Component of the proteasome core, a large protease complex with broad specificity involved in protein degradation. This is Proteasome subunit alpha from Natronomonas pharaonis (strain ATCC 35678 / DSM 2160 / CIP 103997 / JCM 8858 / NBRC 14720 / NCIMB 2260 / Gabara) (Halobacterium pharaonis).